The chain runs to 140 residues: General stress protein 26 (140 aa).

This chain is General stress protein 26 (ydaG), found in Bacillus subtilis (strain 168).